A 126-amino-acid polypeptide reads, in one-letter code: Histone H2B (126 aa).

Residues 1–12 (MPEPAKSAPAPK) are compositionally biased toward low complexity. The interval 1 to 36 (MPEPAKSAPAPKKGSKKAVTKTQKKGDKKRKKSRKE) is disordered. An N6-acetyllysine mark is found at Lys6 and Lys13. The span at 13 to 34 (KGSKKAVTKTQKKGDKKRKKSR) shows a compositional bias: basic residues. The residue at position 15 (Ser15) is a Phosphoserine. An N6-acetyllysine mark is found at Lys16 and Lys21. A Glycyl lysine isopeptide (Lys-Gly) (interchain with G-Cter in ubiquitin) cross-link involves residue Lys121.

This sequence belongs to the histone H2B family. The nucleosome is a histone octamer containing two molecules each of H2A, H2B, H3 and H4 assembled in one H3-H4 heterotetramer and two H2A-H2B heterodimers. The octamer wraps approximately 147 bp of DNA. In terms of processing, monoubiquitination of Lys-121 by the RNF20/40 complex gives a specific tag for epigenetic transcriptional activation and is also prerequisite for histone H3 'Lys-4' and 'Lys-79' methylation. Phosphorylated on Ser-15 during apoptosis; which facilitates apoptotic chromatin condensation.

The protein resides in the nucleus. Its subcellular location is the chromosome. Core component of nucleosome. Nucleosomes wrap and compact DNA into chromatin, limiting DNA accessibility to the cellular machineries which require DNA as a template. Histones thereby play a central role in transcription regulation, DNA repair, DNA replication and chromosomal stability. DNA accessibility is regulated via a complex set of post-translational modifications of histones, also called histone code, and nucleosome remodeling. This chain is Histone H2B, found in Cairina moschata (Muscovy duck).